A 218-amino-acid chain; its full sequence is CD99 antigen-like protein 2 (218 aa).

The first 25 residues, 1-25, serve as a signal peptide directing secretion; sequence MVAWRSAFLVCLAFSLATLVQRGSG. At 26-136 the chain is on the extracellular side; the sequence is DFDDFNLKDA…PGSGMVAETG (111 aa). Residues 72–128 form a disordered region; sequence LADALDDRNDRDDGRRKPIAGGGGFSDKDLEDIVGGGEYKPDKGKGDGRYGSNDDPG. Basic and acidic residues-rich tracts occupy residues 76–87 and 110–119; these read LDDRNDRDDGRR and YKPDKGKGDG. Ser-129 carries O-linked (Xyl...) (chondroitin sulfate) serine glycosylation. A helical transmembrane segment spans residues 137 to 157; that stretch reads TIAGVASALAMALIGAVSSYI. Topologically, residues 158 to 218 are cytoplasmic; that stretch reads SYQQKKFCFS…EPPPSEPARI (61 aa).

This sequence belongs to the CD99 family. Post-translationally, O-glycosylated.

The protein localises to the cell membrane. It is found in the cell junction. It localises to the secreted. Plays a role in a late step of leukocyte extravasation helping cells to overcome the endothelial basement membrane. Acts at the same site as, but independently of, PECAM1. Homophilic adhesion molecule, but these interactions may not be required for cell aggregation. The sequence is that of CD99 antigen-like protein 2 (CD99L2) from Pongo abelii (Sumatran orangutan).